The primary structure comprises 263 residues: tRNA (guanine-N(7)-)-methyltransferase (263 aa).

The interval 1–33 (MSDHGRMHSTGSEVAAPVAPDPDTEGVHPHFNR) is disordered. S-adenosyl-L-methionine is bound by residues Glu89, Glu114, Asp146, and Asp169. Asp169 is a catalytic residue. Substrate-binding positions include Lys173, Asp205, and 242–245 (TKYE).

The protein belongs to the class I-like SAM-binding methyltransferase superfamily. TrmB family.

The enzyme catalyses guanosine(46) in tRNA + S-adenosyl-L-methionine = N(7)-methylguanosine(46) in tRNA + S-adenosyl-L-homocysteine. It participates in tRNA modification; N(7)-methylguanine-tRNA biosynthesis. Catalyzes the formation of N(7)-methylguanine at position 46 (m7G46) in tRNA. This is tRNA (guanine-N(7)-)-methyltransferase from Mycolicibacterium gilvum (strain PYR-GCK) (Mycobacterium gilvum (strain PYR-GCK)).